Reading from the N-terminus, the 132-residue chain is Small ribosomal subunit protein uS8 (132 aa).

Belongs to the universal ribosomal protein uS8 family. In terms of assembly, part of the 30S ribosomal subunit. Contacts proteins S5 and S12.

Functionally, one of the primary rRNA binding proteins, it binds directly to 16S rRNA central domain where it helps coordinate assembly of the platform of the 30S subunit. The polypeptide is Small ribosomal subunit protein uS8 (Ligilactobacillus salivarius (strain UCC118) (Lactobacillus salivarius)).